The sequence spans 404 residues: Multidrug resistance protein MdtH (404 aa).

The Cytoplasmic portion of the chain corresponds to 1-12 (MSRVSQARNLGK). A helical membrane pass occupies residues 13–33 (YFLLIDNMLVVLGFFVVFPLI). The Periplasmic segment spans residues 34 to 98 (SIRFVDQMGW…GFATMGIAHE (65 aa)). A helical membrane pass occupies residues 99–116 (PWLLWFSCFLSGLGGTLF). The Cytoplasmic portion of the chain corresponds to 117 to 138 (DPPRSALVVKLIRPEQRGRFFS). Residues 139-159 (LLMMQDSAGAVIGALLGSWLL) traverse the membrane as a helical segment. Topologically, residues 160 to 164 (QYDFR) are periplasmic. The chain crosses the membrane as a helical span at residues 165-185 (LVCAMGAILFIVCAIFNAWLL). Residues 186–213 (PAWKLSTVRTPVREGMRRVISDKRFVTY) are Cytoplasmic-facing. The chain crosses the membrane as a helical span at residues 214-234 (VLTLAGYYMLAVQVMLMLPIM). At 235-243 (VNDVAGSPA) the chain is on the periplasmic side. The helical transmembrane segment at 244-264 (AVKWMYAIEACLSLTLLYPIA) threads the bilayer. The Cytoplasmic segment spans residues 265-276 (RWSEKRFRLEHR). The chain crosses the membrane as a helical span at residues 277-297 (LMAGLLIMSLSMIPIGLAGNL). Residues 298–299 (QQ) are Periplasmic-facing. A helical membrane pass occupies residues 300–320 (LFTLICAFYIGSVIAEPARET). Topologically, residues 321 to 339 (LSASLTDARARGSYMGFSR) are cytoplasmic. The chain crosses the membrane as a helical span at residues 340–360 (LGLAIGGAIGYIGGGWLFDMG). At 361-367 (KTLAQPE) the chain is on the periplasmic side. A helical transmembrane segment spans residues 368-388 (LPWMMLGIIGFITFLALGWQF). Topologically, residues 389–404 (SHKRTPRQYTGARRLI) are cytoplasmic.

This sequence belongs to the major facilitator superfamily. DHA1 family. MdtH (TC 2.A.1.2.21) subfamily.

Its subcellular location is the cell inner membrane. The chain is Multidrug resistance protein MdtH from Salmonella arizonae (strain ATCC BAA-731 / CDC346-86 / RSK2980).